The chain runs to 283 residues: Probable endonuclease 4 (283 aa).

Zn(2+) contacts are provided by H69, H113, E148, D182, H185, H217, D230, H232, and E262.

Belongs to the AP endonuclease 2 family. Zn(2+) serves as cofactor.

The catalysed reaction is Endonucleolytic cleavage to 5'-phosphooligonucleotide end-products.. Functionally, endonuclease IV plays a role in DNA repair. It cleaves phosphodiester bonds at apurinic or apyrimidinic (AP) sites, generating a 3'-hydroxyl group and a 5'-terminal sugar phosphate. This chain is Probable endonuclease 4, found in Bifidobacterium longum (strain DJO10A).